We begin with the raw amino-acid sequence, 299 residues long: DNA-binding transcriptional repressor CapW (299 aa).

A disordered region spans residues 1–22; the sequence is MTDESKPTDDQPTSKGRQGARW. Positions 1 to 95 are winged HTH domain; sequence MTDESKPTDD…SFKAVFPSSA (95 aa). A WYL domain region spans residues 96 to 207; the sequence is VERYLDDLLR…LTRIKCCKYV (112 aa). A WYL domain is found at 131–211; the sequence is GRRLNADIVG…KCCKYVGQDR (81 aa). Residues 156–200 form a probable ligand-binding region region; the sequence is YQSLTDPEGGERMLSPHALVHDGNRWHVRAYCHKRKAFRDFSLTR. Residues 208–299 form a WCX domain region; the sequence is GQDRDRADED…RDEIKDLIQY (92 aa).

Homodimer.

Transcriptional regulator of a CBASS antivirus system. CBASS (cyclic oligonucleotide-based antiphage signaling system) provides immunity against bacteriophage. The CD-NTase protein synthesizes cyclic nucleotides in response to infection; these serve as specific second messenger signals. The signals activate a diverse range of effectors, leading to bacterial cell death and thus abortive phage infection. A type III CBASS system, part of a Cap17-CapW-CdnC-Cap7-Cap6-Cap18 locus. Binds specifically to palindromes that overlap the -10 site in the promoter of cdnC, found between the genes for divergently transcribed capW and cdnC (cognate DNA). Probably represses transcription bidirectionally from the promoter. The protein is DNA-binding transcriptional repressor CapW of Pseudomonas aeruginosa.